Here is a 537-residue protein sequence, read N- to C-terminus: Phenylalanine--tRNA ligase beta subunit (537 aa).

Positions 268–343 (FNFRPYRLNL…KSYGIENVRE (76 aa)) constitute a B5 domain. Mg(2+)-binding residues include Asp-321, Asp-327, Glu-330, and Asp-331.

This sequence belongs to the phenylalanyl-tRNA synthetase beta subunit family. Type 2 subfamily. As to quaternary structure, tetramer of two alpha and two beta subunits. Mg(2+) is required as a cofactor.

The protein localises to the cytoplasm. The enzyme catalyses tRNA(Phe) + L-phenylalanine + ATP = L-phenylalanyl-tRNA(Phe) + AMP + diphosphate + H(+). The sequence is that of Phenylalanine--tRNA ligase beta subunit from Thermoplasma volcanium (strain ATCC 51530 / DSM 4299 / JCM 9571 / NBRC 15438 / GSS1).